Here is a 195-residue protein sequence, read N- to C-terminus: dITP/XTP pyrophosphatase (195 aa).

9 to 14 (TNNQGK) lines the substrate pocket. Glutamate 39 and aspartate 68 together coordinate Mg(2+). Catalysis depends on aspartate 68, which acts as the Proton acceptor. Substrate contacts are provided by residues serine 69, 146–149 (FGYD), lysine 169, and 174–175 (HR).

It belongs to the HAM1 NTPase family. As to quaternary structure, homodimer. Mg(2+) serves as cofactor.

It carries out the reaction XTP + H2O = XMP + diphosphate + H(+). It catalyses the reaction dITP + H2O = dIMP + diphosphate + H(+). The catalysed reaction is ITP + H2O = IMP + diphosphate + H(+). Pyrophosphatase that catalyzes the hydrolysis of nucleoside triphosphates to their monophosphate derivatives, with a high preference for the non-canonical purine nucleotides XTP (xanthosine triphosphate), dITP (deoxyinosine triphosphate) and ITP. Seems to function as a house-cleaning enzyme that removes non-canonical purine nucleotides from the nucleotide pool, thus preventing their incorporation into DNA/RNA and avoiding chromosomal lesions. The polypeptide is dITP/XTP pyrophosphatase (Gloeobacter violaceus (strain ATCC 29082 / PCC 7421)).